Here is a 147-residue protein sequence, read N- to C-terminus: Hemoglobin subunit beta-2 (147 aa).

Val-2 carries the post-translational modification N-acetylvaline. Residues 3–147 enclose the Globin domain; that stretch reads HLTDAEKATV…VASALAHKYH (145 aa). Phosphoserine is present on Ser-13. N6-succinyllysine is present on Lys-18. Phosphoserine is present on residues Ser-51 and Ser-53. Heme b is bound by residues His-64 and His-93. Asymmetric dimethylarginine is present on Arg-105. Thr-124 bears the Phosphothreonine mark. Cys-126 carries the phosphoserine; in variant Ser-126 modification.

It belongs to the globin family. Heterotetramer of two alpha chains and two beta chains. In terms of tissue distribution, red blood cells.

Involved in oxygen transport from the lung to the various peripheral tissues. This chain is Hemoglobin subunit beta-2, found in Rattus norvegicus (Rat).